Reading from the N-terminus, the 1404-residue chain is Proteoglycan 4 (1404 aa).

Positions 1–24 are cleaved as a signal peptide; it reads MAWKTLPIYLLLLLSVFVIQQVSS. SMB domains lie at 26–69 and 66–108; these read DLSS…AELS and AELS…AEVH. 14 disulfides stabilise this stretch: Cys30–Cys34, Cys30–Cys46, Cys34–Cys64, Cys44–Cys46, Cys44–Cys57, Cys50–Cys56, Cys57–Cys64, Cys70–Cys74, Cys70–Cys86, Cys74–Cys104, Cys84–Cys86, Cys84–Cys97, Cys90–Cys96, and Cys97–Cys104. The disordered stretch occupies residues 111-966; the sequence is TSPPSSKKAP…TTQVTSTTTQ (856 aa). O-linked (GalNAc...) serine glycosylation is found at Ser123 and Ser136. A compositionally biased stretch (basic residues) spans 132–146; sequence TTKRSPKPPNKKKTK. A compositionally biased stretch (low complexity) spans 166–177; the sequence is SSSSSSSSSSSS. The span at 193-205 shows a compositional bias: basic and acidic residues; that stretch reads ELQKKLKVKDNKK. Asn206 carries an N-linked (GlcNAc...) asparagine glycan. The span at 235-252 shows a compositional bias: polar residues; sequence TPDTSTTQHNKVSTSPKI. 2 O-linked (GalNAc...) threonine glycosylation sites follow: Thr240 and Thr253. Positions 266–276 are enriched in polar residues; the sequence is PNSDTSKETSL. 3 O-linked (GalNAc...) threonine glycosylation sites follow: Thr277, Thr291, and Thr305. Ser306 carries O-linked (GalNAc...) serine glycosylation. Thr310 is a glycosylation site (O-linked (GalNAc...) threonine). The O-linked (GalNAc...) serine glycan is linked to Ser317. Thr324, Thr332, and Thr338 each carry an O-linked (GalNAc...) threonine glycan. Low complexity-rich tracts occupy residues 329 to 348 and 356 to 405; these read AKPT…TTPK and KEPA…KEPA. Repeat 1 spans residues 348–355; sequence KEPTPTTP. Residues 348–855 form a 59 X 8 AA repeats of K-X-P-X-P-T-T-X region; sequence KEPTPTTPKE…TPETPPPTTS (508 aa). The stretch at 356 to 363 is one 2; approximate repeat; sequence KEPASTTP. The stretch at 364–371 is repeat 3; the sequence is KEPTPTTI. Thr367 carries an O-linked (GalNAc...) threonine glycan. One copy of the 4; approximate repeat lies at 372 to 378; that stretch reads KSAPTTP. Residue Ser373 is glycosylated (O-linked (GalNAc...) serine). O-linked (GalNAc...) threonine glycosylation is found at Thr376, Thr384, and Thr385. Repeat unit 5 spans residues 379 to 386; it reads KEPAPTTT. The 6; approximate repeat unit spans residues 387-393; that stretch reads KSAPTTP. O-linked (GalNAc...) serine glycosylation is present at Ser388. O-linked (GalNAc...) threonine glycans are attached at residues Thr391, Thr399, Thr400, Thr407, Thr408, Thr415, and Thr423. Repeat copies occupy residues 394 to 401, 402 to 409, 410 to 417, and 418 to 425. Low complexity predominate over residues 413–431; it reads APTTTKEPAPTTTKSAPTT. Residues 426-432 form an 11; approximate repeat; it reads KSAPTTP. Residue Ser427 is glycosylated (O-linked (GalNAc...) serine). Thr430, Thr438, Thr439, Thr446, Thr447, Thr454, and Thr455 each carry an O-linked (GalNAc...) threonine glycan. Composition is skewed to pro residues over residues 432-467 and 476-506; these read PKEP…PKEP and PTTP…PKEP. Repeat copies occupy residues 433–440, 441–448, 449–456, and 457–464. The 16; approximate repeat unit spans residues 465 to 471; the sequence is KEPAPTT. Repeat 17 spans residues 472–479; that stretch reads KEPAPTTP. O-linked (GalNAc...) threonine glycosylation is found at Thr477, Thr478, Thr485, Thr493, Thr494, Thr501, Thr502, and Thr509. Residues 480–487 form an 18; approximate repeat; that stretch reads KEPAPTAP. The 19; approximate repeat unit spans residues 488–495; sequence KKPAPTTP. 4 consecutive repeat copies span residues 496–503, 504–511, 512–519, and 520–527. Residues 523–561 are compositionally biased toward low complexity; it reads APTTTKSAPTTTKEPAPTTTKSAPTTPKEPSPTTTKEPA. A glycan (O-linked (GalNAc...) threonine) is linked at Thr525. One copy of the 24; approximate repeat lies at 528–534; that stretch reads KSAPTTT. O-linked (GalNAc...) serine glycosylation is present at Ser529. Residues Thr532, Thr540, and Thr541 are each glycosylated (O-linked (GalNAc...) threonine). Repeat unit 25 spans residues 535 to 542; sequence KEPAPTTT. One copy of the 26; approximate repeat lies at 543–549; it reads KSAPTTP. 6 consecutive repeat copies span residues 550–557, 558–565, 566–573, 574–581, 582–589, and 590–597. Ser553 carries an O-linked (GalNAc...) serine glycan. Thr555, Thr563, Thr564, Thr571, Thr572, Thr579, Thr580, Thr587, Thr588, Thr595, Thr603, Thr604, Thr611, Thr612, Thr616, Thr619, and Thr627 each carry an O-linked (GalNAc...) threonine glycan. Over residues 562 to 592 the composition is skewed to pro residues; that stretch reads PTTPKEPAPTTPKKPAPTTPKEPAPTTPKEP. Residues 598–605 form a 33; approximate repeat; the sequence is KKPAPTTP. Over residues 602-611 the composition is skewed to pro residues; the sequence is PTTPKEPAPT. Repeat 34 spans residues 606–613; it reads KEPAPTTP. Over residues 612–636 the composition is skewed to low complexity; sequence TPKETAPTTPKKLTPTTPEKLAPTT. The stretch at 614–621 is one 35; approximate repeat; the sequence is KETAPTTP. Residues 622–629 form a 36; approximate repeat; it reads KKLTPTTP. The 37; approximate repeat unit spans residues 638 to 645; the sequence is EKPAPTTP. The segment covering 653-667 has biased composition (pro residues); it reads PEEPTPTTPEEPAPT. A 38; approximate repeat occupies 662–669; sequence EEPAPTTP. Residues Thr676, Thr683, Thr684, Thr691, Thr692, Thr699, Thr700, Thr704, and Thr707 are each glycosylated (O-linked (GalNAc...) threonine). Over residues 677–699 the composition is skewed to pro residues; that stretch reads PKEPAPTTPKEPAPTTPKEPAPT. 3 repeat units span residues 678–685, 686–693, and 694–701. The segment covering 700–721 has biased composition (low complexity); it reads TPKETAPTTPKGTAPTTLKEPA. The 42; approximate repeat unit spans residues 702 to 709; it reads KETAPTTP. The 43; approximate repeat unit spans residues 710–717; sequence KGTAPTTL. Copy 44 of the repeat occupies 718–725; sequence KEPAPTTP. O-linked (GalNAc...) threonine glycans are attached at residues Thr723, Thr724, and Thr736. Residues 728 to 761 are compositionally biased toward low complexity; that stretch reads PAPKELAPTTTKEPTSTTSDKPAPTTPKGTAPTT. A 45; approximate repeat occupies 731–738; the sequence is KELAPTTT. A 46; approximate repeat occupies 739-746; that stretch reads KEPTSTTS. Residues 747-754 form a 47; approximate repeat; sequence DKPAPTTP. A 48; approximate repeat occupies 755–762; the sequence is KGTAPTTP. The segment covering 762 to 776 has biased composition (pro residues); that stretch reads PKEPAPTTPKEPAPT. 2 consecutive repeat copies span residues 763–770 and 771–778. O-linked (GalNAc...) threonine glycans are attached at residues Thr768, Thr769, Thr776, and Thr777. Residues 777 to 790 show a composition bias toward low complexity; sequence TPKGTAPTTLKEPA. The stretch at 779 to 786 is one 51; approximate repeat; that stretch reads KGTAPTTL. Residues 787–794 form repeat 52; it reads KEPAPTTP. Residues Thr792, Thr793, and Thr805 are each glycosylated (O-linked (GalNAc...) threonine). Positions 797–830 are enriched in low complexity; the sequence is PAPKELAPTTTKGPTSTTSDKPAPTTPKETAPTT. One copy of the 53; approximate repeat lies at 800 to 807; sequence KELAPTTT. Residues 808–815 form a 54; approximate repeat; the sequence is KGPTSTTS. Residue Ser812 is glycosylated (O-linked (GalNAc...) serine). One copy of the 55; approximate repeat lies at 816 to 823; sequence DKPAPTTP. A 56; approximate repeat occupies 824–831; sequence KETAPTTP. Residues Thr829, Thr837, and Thr838 are each glycosylated (O-linked (GalNAc...) threonine). Residues 831 to 853 are compositionally biased toward pro residues; sequence PKEPAPTTPKKPAPTTPETPPPT. 2 consecutive repeat copies span residues 832–839 and 840–847. A 59; approximate repeat occupies 848-855; sequence ETPPPTTS. Low complexity predominate over residues 854 to 866; sequence TSEVSTPTTTKEP. O-linked (GalNAc...) serine glycosylation occurs at Ser892. Low complexity predominate over residues 899 to 914; sequence PTTKTPAATKPEMTTT. Thr900 is a glycosylation site (O-linked (GalNAc...) threonine). The span at 915-926 shows a compositional bias: basic and acidic residues; that stretch reads AKDKTTERDLRT. Low complexity predominate over residues 927 to 966; that stretch reads TPETTTAAPKMTKETATTTEKTTESKITATTTQVTSTTTQ. O-linked (GalNAc...) threonine glycosylation is found at Thr930 and Thr931. An O-linked (GalNAc...) serine glycan is attached at Ser962. O-linked (GalNAc...) threonine glycosylation is found at Thr963, Thr968, Thr975, Thr978, Thr979, and Thr980. A disordered region spans residues 992-1104; that stretch reads ITTTEIMNKP…EDAGGAEGET (113 aa). The span at 999–1012 shows a compositional bias: basic and acidic residues; the sequence is NKPEETAKPKDRAT. A compositionally biased stretch (basic residues) spans 1026–1047; it reads KAPKKPTSTKKPKTMPRVRKPK. The O-linked (GalNAc...) threonine glycan is linked to Thr1039. Residues 1048 to 1060 are compositionally biased toward low complexity; sequence TTPTPRKMTSTMP. A compositionally biased stretch (polar residues) spans 1073 to 1085; the sequence is LQTTTRPNQTPNS. Residues Cys1146 and Cys1403 are joined by a disulfide bond. 2 Hemopexin repeats span residues 1148-1191 and 1192-1239; these read GKPV…VWGI and PSPI…FGGL. Residue Asn1159 is glycosylated (N-linked (GlcNAc...) asparagine). Thr1161 carries O-linked (GalNAc...) threonine glycosylation.

In terms of assembly, homodimer; disulfide-linked. Post-translationally, N-glycosylated. In terms of processing, O-glycosylated; contains glycosaminoglycan chondroitin sulfate and keratan sulfate. O-glycosylated with sialylated oligosaccharides which are predominantly represented by the monosialylated core type I structure, NeuNAcalpha2-3Galbeta1-3GalNAc, with smaller amounts of disialylated O-glycans. The disulfide bond between Cys-1146 and Cys-1403 is essential for protein cleavage. Post-translationally, proteolytically cleaved by cathepsin CTSG. Highly expressed in synovial tissue, cartilage and liver and weakly in heart and lung. Isoform B is expressed in kidney, lung, liver, heart and brain. Isoform C and isoform D are widely expressed.

The protein localises to the secreted. Plays a role in boundary lubrication within articulating joints. Prevents protein deposition onto cartilage from synovial fluid by controlling adhesion-dependent synovial growth and inhibiting the adhesion of synovial cells to the cartilage surface. Functionally, isoform F plays a role as a growth factor acting on the primitive cells of both hematopoietic and endothelial cell lineages. This Homo sapiens (Human) protein is Proteoglycan 4 (PRG4).